The following is a 943-amino-acid chain: Isoleucine--tRNA ligase (943 aa).

Residues Pro59 to His69 carry the 'HIGH' region motif. Glu577 lines the L-isoleucyl-5'-AMP pocket. The short motif at Lys618–Ser622 is the 'KMSKS' region element. Residue Lys621 participates in ATP binding. 4 residues coordinate Zn(2+): Cys906, Cys909, Cys926, and Cys929.

The protein belongs to the class-I aminoacyl-tRNA synthetase family. IleS type 1 subfamily. As to quaternary structure, monomer. Requires Zn(2+) as cofactor.

It localises to the cytoplasm. The catalysed reaction is tRNA(Ile) + L-isoleucine + ATP = L-isoleucyl-tRNA(Ile) + AMP + diphosphate. Its function is as follows. Catalyzes the attachment of isoleucine to tRNA(Ile). As IleRS can inadvertently accommodate and process structurally similar amino acids such as valine, to avoid such errors it has two additional distinct tRNA(Ile)-dependent editing activities. One activity is designated as 'pretransfer' editing and involves the hydrolysis of activated Val-AMP. The other activity is designated 'posttransfer' editing and involves deacylation of mischarged Val-tRNA(Ile). In Stenotrophomonas maltophilia (strain K279a), this protein is Isoleucine--tRNA ligase.